The following is a 301-amino-acid chain: Mitochondrial thiamine pyrophosphate carrier 1 (301 aa).

3 Solcar repeats span residues 15–102 (VTPT…ISKS), 115–200 (SSAN…AREL), and 206–293 (RVPF…SLSF). The next 6 membrane-spanning stretches (helical) occupy residues 20–38 (ALVA…TAPL), 79–99 (VPAE…YSII), 121–141 (LIVG…FDLL), 172–192 (IYAG…LMFW), 207–227 (VPFI…GITF), and 252–272 (IFVT…FGIS).

It belongs to the mitochondrial carrier (TC 2.A.29) family.

The protein resides in the mitochondrion inner membrane. Mitochondrial transporter that mediates uptake of thiamine pyrophosphate (ThPP) into mitochondria. This is Mitochondrial thiamine pyrophosphate carrier 1 (TPC1) from Candida albicans (strain SC5314 / ATCC MYA-2876) (Yeast).